The following is a 502-amino-acid chain: Sporulation-specific protein 2 (502 aa).

An N-terminal signal peptide occupies residues 1-56 (MPIWKTQTFFTSISVIQIVNKETKVSTKKEKDSMLNQLNTILRFLFLFLQLIKSSA). 7 N-linked (GlcNAc...) asparagine glycosylation sites follow: Asn-77, Asn-135, Asn-285, Asn-303, Asn-340, Asn-343, and Asn-355. The disordered stretch occupies residues 441–474 (EGNVLGKQETDNDNGKKEKGKNGAKSQGSSKKME). Residues 448 to 461 (QETDNDNGKKEKGK) are compositionally biased toward basic and acidic residues. Asn-475 carries the GPI-anchor amidated asparagine lipid modification. Residues 476–502 (SAPKNIFIDAFKMSVYAVFTVLFSIIF) constitute a propeptide, removed in mature form.

The protein belongs to the SPS2 family.

It localises to the cell membrane. Involved in middle stages of meiosis. Redundant with SPS22 for the organization of the beta-glucan layer of the spore wall. This Saccharomyces cerevisiae (strain ATCC 204508 / S288c) (Baker's yeast) protein is Sporulation-specific protein 2 (SPS2).